The following is a 671-amino-acid chain: UvrABC system protein B (671 aa).

In terms of domain architecture, Helicase ATP-binding spans 25-412 (EGIDAGLAHQ…AGRIVEQVVR (388 aa)). Position 38 to 45 (38 to 45 (GVTGSGKT)) interacts with ATP. The Beta-hairpin signature appears at 91-114 (YYDYYQPEAYVPSSDTFIEKDASI). The Helicase C-terminal domain occupies 429–582 (QVDDLLSEIH…QIAFNLEHGI (154 aa)). The tract at residues 601-625 (PGSRSKKRKGMAKAAEESARYENEL) is disordered. Residues 614–625 (AAEESARYENEL) are compositionally biased toward basic and acidic residues. In terms of domain architecture, UVR spans 632–667 (NKRIRQLEEKMYQLARDLEFEAAAQMRDEIGKLRER).

The protein belongs to the UvrB family. Forms a heterotetramer with UvrA during the search for lesions. Interacts with UvrC in an incision complex.

The protein resides in the cytoplasm. The UvrABC repair system catalyzes the recognition and processing of DNA lesions. A damage recognition complex composed of 2 UvrA and 2 UvrB subunits scans DNA for abnormalities. Upon binding of the UvrA(2)B(2) complex to a putative damaged site, the DNA wraps around one UvrB monomer. DNA wrap is dependent on ATP binding by UvrB and probably causes local melting of the DNA helix, facilitating insertion of UvrB beta-hairpin between the DNA strands. Then UvrB probes one DNA strand for the presence of a lesion. If a lesion is found the UvrA subunits dissociate and the UvrB-DNA preincision complex is formed. This complex is subsequently bound by UvrC and the second UvrB is released. If no lesion is found, the DNA wraps around the other UvrB subunit that will check the other stand for damage. The polypeptide is UvrABC system protein B (Pseudomonas syringae pv. tomato (strain ATCC BAA-871 / DC3000)).